Here is a 114-residue protein sequence, read N- to C-terminus: UPF0102 protein HP_0823 (114 aa).

It belongs to the UPF0102 family.

The chain is UPF0102 protein HP_0823 from Helicobacter pylori (strain ATCC 700392 / 26695) (Campylobacter pylori).